A 229-amino-acid chain; its full sequence is MSFNWTQLVPGVGHEYAHVATLGIATVAAVGIGAAARASLGKGEAAVLPASKFSLRGIFELLTEMTSGLADMVIGEHGKHYIPFFASVFFFILFNNLLGMIPGMTPATENMNTTFGFGVLMFLFYNFQGVKENGPVAYLKHFMGPVIFLAPLMFVIEIVSHIVRPFSLGLRLANVMMGDHTVLSVFLDLVPIGVPIPFYVMGLFVCFVQAFVFTLLSMVYVAFAIAHDH.

A run of 6 helical transmembrane segments spans residues 16–36 (YAHVATLGIATVAAVGIGAAA), 81–101 (YIPFFASVFFFILFNNLLGMI), 110–130 (NMNTTFGFGVLMFLFYNFQGV), 142–162 (FMGPVIFLAPLMFVIEIVSHI), 175–195 (VMMGDHTVLSVFLDLVPIGVP), and 196–216 (IPFYVMGLFVCFVQAFVFTLL).

It belongs to the ATPase A chain family. As to quaternary structure, F-type ATPases have 2 components, CF(1) - the catalytic core - and CF(0) - the membrane proton channel. CF(1) has five subunits: alpha(3), beta(3), gamma(1), delta(1), epsilon(1). CF(0) has three main subunits: a(1), b(2) and c(9-12). The alpha and beta chains form an alternating ring which encloses part of the gamma chain. CF(1) is attached to CF(0) by a central stalk formed by the gamma and epsilon chains, while a peripheral stalk is formed by the delta and b chains.

It is found in the cell inner membrane. Functionally, key component of the proton channel; it plays a direct role in the translocation of protons across the membrane. This is ATP synthase subunit a from Bdellovibrio bacteriovorus (strain ATCC 15356 / DSM 50701 / NCIMB 9529 / HD100).